A 128-amino-acid polypeptide reads, in one-letter code: Phosphoribosyl-AMP cyclohydrolase (128 aa).

Residue aspartate 79 coordinates Mg(2+). Cysteine 80 is a binding site for Zn(2+). Residues aspartate 81 and aspartate 83 each contribute to the Mg(2+) site. Zn(2+) is bound by residues cysteine 97 and cysteine 104.

It belongs to the PRA-CH family. As to quaternary structure, homodimer. It depends on Mg(2+) as a cofactor. The cofactor is Zn(2+).

It is found in the cytoplasm. It catalyses the reaction 1-(5-phospho-beta-D-ribosyl)-5'-AMP + H2O = 1-(5-phospho-beta-D-ribosyl)-5-[(5-phospho-beta-D-ribosylamino)methylideneamino]imidazole-4-carboxamide. It functions in the pathway amino-acid biosynthesis; L-histidine biosynthesis; L-histidine from 5-phospho-alpha-D-ribose 1-diphosphate: step 3/9. In terms of biological role, catalyzes the hydrolysis of the adenine ring of phosphoribosyl-AMP. This Saccharophagus degradans (strain 2-40 / ATCC 43961 / DSM 17024) protein is Phosphoribosyl-AMP cyclohydrolase.